The following is a 145-amino-acid chain: Mediator of RNA polymerase II transcription subunit 21 (145 aa).

Residues 79 to 112 are a coiled coil; sequence EESTAALQAASLRQLEEENQEAAARLEEVVYRGD.

The protein belongs to the Mediator complex subunit 21 family. As to quaternary structure, component of the Mediator complex.

The protein resides in the nucleus. Its function is as follows. Component of the Mediator complex, a coactivator involved in the regulated transcription of nearly all RNA polymerase II-dependent genes. Mediator functions as a bridge to convey information from gene-specific regulatory proteins to the basal RNA polymerase II transcription machinery. Mediator is recruited to promoters by direct interactions with regulatory proteins and serves as a scaffold for the assembly of a functional preinitiation complex with RNA polymerase II and the general transcription factors. This Danio rerio (Zebrafish) protein is Mediator of RNA polymerase II transcription subunit 21 (med21).